The following is a 161-amino-acid chain: RNA pyrophosphohydrolase (161 aa).

In terms of domain architecture, Nudix hydrolase spans 12–154 (PYRIGVGMVI…KRKLYKAVIN (143 aa)). Residues 46 to 67 (GGIILGETYSKAVLREMKEEIG) carry the Nudix box motif.

Belongs to the Nudix hydrolase family. RppH subfamily. It depends on a divalent metal cation as a cofactor.

Its function is as follows. Accelerates the degradation of transcripts by removing pyrophosphate from the 5'-end of triphosphorylated RNA, leading to a more labile monophosphorylated state that can stimulate subsequent ribonuclease cleavage. The sequence is that of RNA pyrophosphohydrolase from Orientia tsutsugamushi (strain Boryong) (Rickettsia tsutsugamushi).